Reading from the N-terminus, the 187-residue chain is Peptidoglycan-recognition protein 2 (187 aa).

The N-terminal stretch at 1–19 is a signal peptide; that stretch reads MKAFLVALVVAIELTLVFA. 2 disulfide bridges follow: Cys-21-Cys-144 and Cys-58-Cys-64. Residues 43–170 form the N-acetylmuramoyl-L-alanine amidase domain; sequence KPLKYVIIHH…RTVRPTDSPG (128 aa).

The protein belongs to the N-acetylmuramoyl-L-alanine amidase 2 family. In terms of tissue distribution, localizes to plasma (at protein level).

The protein resides in the secreted. Peptidoglycan-recognition protein probably involved in innate immunity by binding to peptidoglycans (PGN) of bacteria and activating the prophenoloxidase (proPO) cascade immune response. Binds to 1,3-beta-D-glucan and PGN. In Holotrichia diomphalia (Korean black chafer), this protein is Peptidoglycan-recognition protein 2 (PGRP-2).